Reading from the N-terminus, the 298-residue chain is ATP phosphoribosyltransferase (298 aa).

It belongs to the ATP phosphoribosyltransferase family. Long subfamily. Requires Mg(2+) as cofactor.

Its subcellular location is the cytoplasm. The enzyme catalyses 1-(5-phospho-beta-D-ribosyl)-ATP + diphosphate = 5-phospho-alpha-D-ribose 1-diphosphate + ATP. It functions in the pathway amino-acid biosynthesis; L-histidine biosynthesis; L-histidine from 5-phospho-alpha-D-ribose 1-diphosphate: step 1/9. With respect to regulation, feedback inhibited by histidine. Its function is as follows. Catalyzes the condensation of ATP and 5-phosphoribose 1-diphosphate to form N'-(5'-phosphoribosyl)-ATP (PR-ATP). Has a crucial role in the pathway because the rate of histidine biosynthesis seems to be controlled primarily by regulation of HisG enzymatic activity. The polypeptide is ATP phosphoribosyltransferase (Aeromonas salmonicida (strain A449)).